Here is a 294-residue protein sequence, read N- to C-terminus: tRNA dimethylallyltransferase (294 aa).

7–14 (GPTGSGKS) serves as a coordination point for ATP. Substrate is bound at residue 9-14 (TGSGKS).

It belongs to the IPP transferase family. In terms of assembly, monomer. Requires Mg(2+) as cofactor.

It catalyses the reaction adenosine(37) in tRNA + dimethylallyl diphosphate = N(6)-dimethylallyladenosine(37) in tRNA + diphosphate. In terms of biological role, catalyzes the transfer of a dimethylallyl group onto the adenine at position 37 in tRNAs that read codons beginning with uridine, leading to the formation of N6-(dimethylallyl)adenosine (i(6)A). This chain is tRNA dimethylallyltransferase, found in Akkermansia muciniphila (strain ATCC BAA-835 / DSM 22959 / JCM 33894 / BCRC 81048 / CCUG 64013 / CIP 107961 / Muc).